We begin with the raw amino-acid sequence, 120 residues long: NAD(P)H-quinone oxidoreductase subunit 3, chloroplastic (120 aa).

A run of 3 helical transmembrane segments spans residues 10-30 (LWFFLVIASIVPILAFTISEI), 64-84 (MFALVFVVFDVETVFLYPWAI), and 89-109 (LGISAFIEALLFILILMVGLV).

The protein belongs to the complex I subunit 3 family. NDH is composed of at least 16 different subunits, 5 of which are encoded in the nucleus.

The protein localises to the plastid. It localises to the chloroplast thylakoid membrane. The enzyme catalyses a plastoquinone + NADH + (n+1) H(+)(in) = a plastoquinol + NAD(+) + n H(+)(out). It catalyses the reaction a plastoquinone + NADPH + (n+1) H(+)(in) = a plastoquinol + NADP(+) + n H(+)(out). In terms of biological role, NDH shuttles electrons from NAD(P)H:plastoquinone, via FMN and iron-sulfur (Fe-S) centers, to quinones in the photosynthetic chain and possibly in a chloroplast respiratory chain. The immediate electron acceptor for the enzyme in this species is believed to be plastoquinone. Couples the redox reaction to proton translocation, and thus conserves the redox energy in a proton gradient. The polypeptide is NAD(P)H-quinone oxidoreductase subunit 3, chloroplastic (Chara vulgaris (Common stonewort)).